Consider the following 169-residue polypeptide: dCTP pyrophosphatase 1 (169 aa).

A disordered region spans residues 1–26; it reads MSASEEMLGGARGESTTATGPFSFSS. A compositionally biased stretch (polar residues) spans 14–26; it reads ESTTATGPFSFSS. Substrate contacts are provided by residues histidine 37 and 46–50; that span reads WEQFH. Mg(2+) contacts are provided by glutamate 62 and glutamate 65. Tryptophan 72 is a binding site for substrate. Serine 84 bears the Phosphoserine mark. Residues glutamate 94 and aspartate 97 each coordinate Mg(2+). A substrate-binding site is contributed by tyrosine 101. The interval 143-169 is disordered; sequence LPHGATSENQAMGPADPASESTGQVST.

Homotetramer. The cofactor is Mg(2+).

It is found in the cytoplasm. Its subcellular location is the cytosol. It carries out the reaction dCTP + H2O = dCMP + diphosphate + H(+). In terms of biological role, hydrolyzes deoxynucleoside triphosphates (dNTPs) to the corresponding nucleoside monophosphates. Has a strong preference for dCTP and its analogs including 5-iodo-dCTP and 5-methyl-dCTP for which it may even have a higher efficiency. May protect DNA or RNA against the incorporation of these genotoxic nucleotide analogs through their catabolism. The protein is dCTP pyrophosphatase 1 of Bos taurus (Bovine).